A 238-amino-acid chain; its full sequence is Ethylene-responsive transcription factor ERN3 (238 aa).

Residues lysine 24–serine 81 constitute a DNA-binding region (AP2/ERF).

It belongs to the AP2/ERF transcription factor family. ERF subfamily. In terms of tissue distribution, expressed in roots, root hairs and leaves.

It localises to the nucleus. Transcription factor involved in symbiotic nodule signaling in response to rhizobial Nod factors (NFs). Binds to the GCC box (NF-responsive box) of ENOD11 promoter. May act as transcriptional repressor of NF-responsive box-containing target gene promoters in root hairs. In Medicago truncatula (Barrel medic), this protein is Ethylene-responsive transcription factor ERN3.